The following is a 1533-amino-acid chain: MYSNSNAFLGGANSLRPGQQPQQQQQQYGAPSPFGQQGPMQPQPTGFAPQPTGFAPQPTGFGQQQTGYGQQQQQPLQQQFTGYPGLQAPQQQPQLQQQFTGFQPQATGFQPQVTGFQPQATGFQPQAPQQQPFQTGMPPVPAIPQQFQQQQSFQQQQQQQQQPSIQQPQPTGFPSVQIQAPAQQPAPTAQGGIAPPPPVKPQATGFSEMAASFQTAGGKGRRAEQKTNTVKIPNIRLSFITAHDQARFETLFKSAVGEGQTTMSGEKARDLLLRSKLDGDSLSQIWTLADTTRSGQLHFPEFALAMYLCNLKITGKALPSVLPDHIKNEVSSMVDIINFSITDDAGSSSAPASNAPSFATQQNTAAVPTIQQPQPQPSNSAILQAQMTGFPAQQTGFMGQNQGLQPQQTGFPGMNPQPTGYAGPMPPMPPMPTGFGSNLSPNAGPGGMVAPLNSQPTGMPGQWGLVNTPATGLPLIDALQARMMPQLGREQRNYTTAGLQGNAVIPWAITKDEKTRYDALFRAWDGLNKGFIAGDAAIEIFGQSGLDKPDLERIWTLADNGNKGRLDLDEFAVAMHLIYRKLNGYPIPNQLPPELVPPSARNLSASIGMVKNMLHQESELRKNTGASLLPQKTGVSYLKGHSFKNTGANRKDATVFKNNDEEVGYRSSARRRVGTSPRPESPAASNSGDDLTIEQLRKKIKEKQVLLDAMDFNDEKNMEEDDILDRRDRREADELYRRIRRIQEDIDNHPDAQLMSADSDAERRALKRQLQQLTDRIPELASQVRKTEKAIADARLELFRLKDAKAHPNSAAAIVGTGPGGMVTESDRIKARAKAMMQQRTAALMGKKIDIGDDDADGPKRLEEENIKIKTEKENNERMVRDVEDSVREFAKGIEDSLKEGAPDSTSEHEKRRWEDALGVEDEVRDFIFDLQRESRAARIRSQDRQGGRKATQEPVKAEAPVSTRVETPSPSISRTSTPASTAGGGSYSSYKTPEERAAFIKQQAEQRMAERLAALGLKAPGKPGETAAQRAERERAERAEKRRQAEEEDARREAERQAKLAEEEGGPAPVASPKADSRPPPPPPSRKAGKADDRRDEEAAAKKAEEERLEREREEQERETRELEESAKAQEDELAKERAEADARLKALEEQVRLGKLKKEEEKRKKKAAMAEAKEKEAQLAARRAEIEAARKREEELRKQLEAIDDEDSSSSDEEGPEQITPQASTPTVGGSQVGTHEQEPNSPPPPAPASVASPPQIVTTSPNAERESRNPYFKMMSQSSEASTSSVAAPVASPPPPADVSTNPFHRMTQAAAAPAAAVSSAVSGAVSGISDAISGVMPSRRRPNDDDDDDWGSEKGSDDEDSDDEGRPGGNSAAALASILFGTMAPPRPLSATGEKPTASTPPVVSSPSSPPPPPAPVEPSAGSPPPPPPPPPGPPPAPSGGAPPPPPPPPPMPESGAPAAPPPPPPPGPPPAPGAVPPPPPPPPGGAPAPSLPAGRPAGLLGEIQAGRALKKTQTKDKSQAAVAGRVLD.

A disordered region spans residues 1 to 204 (MYSNSNAFLG…PPPPVKPQAT (204 aa)). Low complexity-rich tracts occupy residues 19–46 (QQPQ…QPTG), 53–136 (GFAP…FQTG), 143–170 (IPQQ…QPQP), and 177–193 (QIQA…QGGI). The EH 1 domain occupies 244-333 (DQARFETLFK…DHIKNEVSSM (90 aa)). One can recognise an EF-hand 1 domain in the interval 277–312 (LDGDSLSQIWTLADTTRSGQLHFPEFALAMYLCNLK). The segment covering 345–359 (AGSSSAPASNAPSFA) has biased composition (low complexity). 2 disordered regions span residues 345–378 (AGSS…PQPS) and 393–423 (QQTG…GYAG). Polar residues-rich tracts occupy residues 360–378 (TQQN…PQPS) and 393–410 (QQTG…QQTG). One can recognise an EH 2 domain in the interval 513-602 (EKTRYDALFR…PELVPPSARN (90 aa)). In terms of domain architecture, EF-hand 2 spans 546–581 (LDKPDLERIWTLADNGNKGRLDLDEFAVAMHLIYRK). Positions 649–664 (NRKDATVFKNNDEEVG) are enriched in basic and acidic residues. Disordered regions lie at residues 649-691 (NRKD…GDDL), 894-917 (IEDS…WEDA), 935-1306 (SRAA…STNP), and 1334-1533 (DAIS…RVLD). Positions 690–890 (DLTIEQLRKK…RDVEDSVREF (201 aa)) form a coiled coil. Basic and acidic residues-rich tracts occupy residues 894–916 (IEDS…RWED) and 935–947 (SRAA…DRQG). The segment covering 968-982 (TPSPSISRTSTPAST) has biased composition (low complexity). The stretch at 1026-1209 (ETAAQRAERE…KQLEAIDDED (184 aa)) forms a coiled coil. Composition is skewed to basic and acidic residues over residues 1031–1063 (RAER…KLAE), 1090–1164 (GKAD…EEEK), and 1173–1203 (EAKE…KQLE). The segment covering 1204–1218 (AIDDEDSSSSDEEGP) has biased composition (acidic residues). Polar residues predominate over residues 1221–1237 (ITPQASTPTVGGSQVGT). Positions 1279 to 1293 (SQSSEASTSSVAAPV) are enriched in low complexity. A compositionally biased stretch (acidic residues) spans 1348-1367 (DDDDDDWGSEKGSDDEDSDD). The segment covering 1412 to 1495 (SSPPPPPAPV…PPPGGAPAPS (84 aa)) has biased composition (pro residues). A WH2 domain is found at 1500 to 1517 (RPAGLLGEIQAGRALKKT).

Belongs to the PAN1 family. As to quaternary structure, component of the PAN1 actin cytoskeleton-regulatory complex.

The protein resides in the cell membrane. It localises to the endosome membrane. It is found in the cytoplasm. The protein localises to the cytoskeleton. Its subcellular location is the actin patch. Functionally, component of the PAN1 actin cytoskeleton-regulatory complex required for the internalization of endosomes during actin-coupled endocytosis. The complex links the site of endocytosis to the cell membrane-associated actin cytoskeleton. Mediates uptake of external molecules and vacuolar degradation of plasma membrane proteins. Plays a role in the proper organization of the cell membrane-associated actin cytoskeleton and promotes its destabilization. This is Actin cytoskeleton-regulatory complex protein pan-1 (pan-1) from Neurospora crassa (strain ATCC 24698 / 74-OR23-1A / CBS 708.71 / DSM 1257 / FGSC 987).